A 453-amino-acid polypeptide reads, in one-letter code: UDP-N-acetylmuramoylalanine--D-glutamate ligase (453 aa).

ATP is bound at residue 120 to 126 (GSNGKST).

Belongs to the MurCDEF family.

The protein resides in the cytoplasm. It carries out the reaction UDP-N-acetyl-alpha-D-muramoyl-L-alanine + D-glutamate + ATP = UDP-N-acetyl-alpha-D-muramoyl-L-alanyl-D-glutamate + ADP + phosphate + H(+). The protein operates within cell wall biogenesis; peptidoglycan biosynthesis. Functionally, cell wall formation. Catalyzes the addition of glutamate to the nucleotide precursor UDP-N-acetylmuramoyl-L-alanine (UMA). In Nitrosococcus oceani (strain ATCC 19707 / BCRC 17464 / JCM 30415 / NCIMB 11848 / C-107), this protein is UDP-N-acetylmuramoylalanine--D-glutamate ligase.